A 220-amino-acid chain; its full sequence is MALVFRTVAQLAGVSLSLLGWVLSCLTNYLPHWKNLNLDLNEMENWTMGLWQTCVIQEEVGMQCKDFDSFLALPAELRVSRILMFLSNGLGFLGLLVSGFGLDCLRIGESQRDLKRRLLILGGILSWASGVTALVPVSWVAHKTVQEFWDENVPDFVPRWEFGEALFLGWFAGLSLLLGGCLLHCAACSSHAPLASGHYAVAQTQDHHQELETRNTNLKH.

Residues 1-10 (MALVFRTVAQ) lie on the Cytoplasmic side of the membrane. A helical membrane pass occupies residues 11–30 (LAGVSLSLLGWVLSCLTNYL). Residues 31–81 (PHWKNLNLDLNEMENWTMGLWQTCVIQEEVGMQCKDFDSFLALPAELRVSR) are Extracellular-facing. Residues 82–102 (ILMFLSNGLGFLGLLVSGFGL) traverse the membrane as a helical segment. Residues 103 to 117 (DCLRIGESQRDLKRR) lie on the Cytoplasmic side of the membrane. The helical transmembrane segment at 118-138 (LLILGGILSWASGVTALVPVS) threads the bilayer. Residues 139 to 164 (WVAHKTVQEFWDENVPDFVPRWEFGE) are Extracellular-facing. The helical transmembrane segment at 165-185 (ALFLGWFAGLSLLLGGCLLHC) threads the bilayer. At 186-220 (AACSSHAPLASGHYAVAQTQDHHQELETRNTNLKH) the chain is on the cytoplasmic side.

The protein belongs to the claudin family.

The protein resides in the cell junction. It is found in the tight junction. The protein localises to the cell membrane. Plays a major role in tight junction-specific obliteration of the intercellular space, through calcium-independent cell-adhesion activity. In Homo sapiens (Human), this protein is Claudin-22 (CLDN22).